The sequence spans 108 residues: Large ribosomal subunit protein bL31B (108 aa).

Residues 86-108 (KPETVVEDVLPKGKKKSPAKKKK) are disordered. The segment covering 97–108 (KGKKKSPAKKKK) has biased composition (basic residues).

This sequence belongs to the bacterial ribosomal protein bL31 family. Type B subfamily. In terms of assembly, part of the 50S ribosomal subunit.

The polypeptide is Large ribosomal subunit protein bL31B (Chlamydia trachomatis serovar L2 (strain ATCC VR-902B / DSM 19102 / 434/Bu)).